A 302-amino-acid polypeptide reads, in one-letter code: Acetylesterase (302 aa).

Residues 1 to 21 (MGRFLTTTALALLATGGAATA) form the signal peptide. N-linked (GlcNAc...) asparagine glycans are attached at residues Asn84 and Asn101.

This sequence belongs to the carbohydrate esterase CE16 family.

It localises to the secreted. The enzyme catalyses an acetyl ester + H2O = an aliphatic alcohol + acetate + H(+). Acetyl esterase that acts as an exo-deacetylase. Liberates acetic acid from xylo-oligomers. This chain is Acetylesterase, found in Thermothelomyces thermophilus (Myceliophthora thermophila).